The sequence spans 557 residues: NADP-dependent malic enzyme (557 aa).

The active-site Proton donor is tyrosine 88. NADP(+) is bound at residue arginine 141. Residue lysine 159 is the Proton acceptor of the active site. 3 residues coordinate a divalent metal cation: glutamate 231, aspartate 232, and aspartate 255. Aspartate 255 provides a ligand contact to NADP(+). A Phosphoserine modification is found at serine 322. Asparagine 394 is a binding site for NADP(+).

Belongs to the malic enzymes family. In terms of assembly, homotetramer. Mg(2+) serves as cofactor. It depends on Mn(2+) as a cofactor.

It localises to the cytoplasm. The enzyme catalyses (S)-malate + NADP(+) = pyruvate + CO2 + NADPH. It carries out the reaction oxaloacetate + H(+) = pyruvate + CO2. In terms of biological role, catalyzes the oxidative decarboxylation of (S)-malate in the presence of NADP(+) and divalent metal ions, and decarboxylation of oxaloacetate. In Sus scrofa (Pig), this protein is NADP-dependent malic enzyme (ME1).